A 557-amino-acid polypeptide reads, in one-letter code: Formate--tetrahydrofolate ligase (557 aa).

66–73 (TPAGEGKS) is an ATP binding site.

Belongs to the formate--tetrahydrofolate ligase family.

It catalyses the reaction (6S)-5,6,7,8-tetrahydrofolate + formate + ATP = (6R)-10-formyltetrahydrofolate + ADP + phosphate. It functions in the pathway one-carbon metabolism; tetrahydrofolate interconversion. The sequence is that of Formate--tetrahydrofolate ligase from Clostridium botulinum (strain ATCC 19397 / Type A).